Consider the following 352-residue polypeptide: UDP-N-acetylglucosamine--N-acetylmuramyl-(pentapeptide) pyrophosphoryl-undecaprenol N-acetylglucosamine transferase (352 aa).

Positions 195 and 287 each coordinate UDP-N-acetyl-alpha-D-glucosamine.

This sequence belongs to the glycosyltransferase 28 family. MurG subfamily.

The protein resides in the cell membrane. It carries out the reaction Mur2Ac(oyl-L-Ala-gamma-D-Glu-L-Lys-D-Ala-D-Ala)-di-trans,octa-cis-undecaprenyl diphosphate + UDP-N-acetyl-alpha-D-glucosamine = beta-D-GlcNAc-(1-&gt;4)-Mur2Ac(oyl-L-Ala-gamma-D-Glu-L-Lys-D-Ala-D-Ala)-di-trans,octa-cis-undecaprenyl diphosphate + UDP + H(+). It functions in the pathway cell wall biogenesis; peptidoglycan biosynthesis. Cell wall formation. Catalyzes the transfer of a GlcNAc subunit on undecaprenyl-pyrophosphoryl-MurNAc-pentapeptide (lipid intermediate I) to form undecaprenyl-pyrophosphoryl-MurNAc-(pentapeptide)GlcNAc (lipid intermediate II). This is UDP-N-acetylglucosamine--N-acetylmuramyl-(pentapeptide) pyrophosphoryl-undecaprenol N-acetylglucosamine transferase from Streptococcus pneumoniae (strain CGSP14).